Consider the following 424-residue polypeptide: Cyclin-dependent kinase D-1 (424 aa).

One can recognise a Protein kinase domain in the interval 19–299 (YLKREVLGEG…AQQALEHRYF (281 aa)). ATP-binding positions include 25–33 (LGEGTYGVV) and K48. T29 carries the phosphothreonine modification. A Phosphotyrosine modification is found at Y30. D141 functions as the Proton acceptor in the catalytic mechanism. S168 carries the post-translational modification Phosphoserine. T174 carries the post-translational modification Phosphothreonine. Disordered stretches follow at residues 303-337 (PAPT…PVVL) and 359-424 (ADRT…GYTE). The segment covering 359-374 (ADRTEEHPSGARHMDD) has biased composition (basic and acidic residues).

This sequence belongs to the protein kinase superfamily. CMGC Ser/Thr protein kinase family. CDC2/CDKX subfamily.

The protein resides in the nucleus. It catalyses the reaction L-seryl-[protein] + ATP = O-phospho-L-seryl-[protein] + ADP + H(+). The catalysed reaction is L-threonyl-[protein] + ATP = O-phospho-L-threonyl-[protein] + ADP + H(+). The enzyme catalyses [DNA-directed RNA polymerase] + ATP = phospho-[DNA-directed RNA polymerase] + ADP + H(+). This Oryza sativa subsp. indica (Rice) protein is Cyclin-dependent kinase D-1 (CDKD-1).